The sequence spans 663 residues: Epithelial sodium channel subunit gamma-2 (663 aa).

The Cytoplasmic segment spans residues 1–55; the sequence is MSNSGKKLTQKLKKNLPVTGPQAPTLYELMQWYCLNTNTHGCRRIVVSKGRLRRW. A helical membrane pass occupies residues 56–76; the sequence is IWIVLTLIAVALIFWQCALLL. Residues 77–544 lie on the Extracellular side of the membrane; that stretch reads MTYYSVSASI…GGQLGLWMSC (468 aa). Disulfide bonds link cysteine 101–cysteine 286, cysteine 209–cysteine 217, cysteine 263–cysteine 270, cysteine 375–cysteine 460, cysteine 397–cysteine 456, cysteine 401–cysteine 452, cysteine 410–cysteine 437, and cysteine 412–cysteine 426. Residues 545–565 traverse the membrane as a helical segment; the sequence is SMVCGLEIVEVFFIDSFWVIL. Residues 566–663 are Cytoplasmic-facing; that stretch reads RQKWHKLCNW…IDSDEDVERF (98 aa).

Belongs to the amiloride-sensitive sodium channel (TC 1.A.6) family. SCNN1G subfamily. In terms of assembly, component of the heterotrimeric epithelial sodium channel (ENaC) composed of an alpha/SCNN1A, a beta/SCNN1B and a gamma/SCNN1G subunit.

It localises to the apical cell membrane. It catalyses the reaction Na(+)(in) = Na(+)(out). Originally identified and characterized by its inhibition by the diuretic drug amiloride. In terms of biological role, this is one of the three pore-forming subunits of the heterotrimeric epithelial sodium channel (ENaC), a critical regulator of sodium balance and fluid homeostasis. ENaC operates in epithelial tissues, where it mediates the electrodiffusion of sodium ions from extracellular fluid through the apical membrane of cells, with water following osmotically. The chain is Epithelial sodium channel subunit gamma-2 (scnn1g-b) from Xenopus laevis (African clawed frog).